We begin with the raw amino-acid sequence, 481 residues long: Trigger factor (481 aa).

Positions 161–298 (GDQLTATVQT…VSEIQNRQLP (138 aa)) constitute a PPIase FKBP-type domain. The tract at residues 173 to 245 (DGVPLHKLDE…PTTLIMEERR (73 aa)) is disordered. Acidic residues predominate over residues 182–235 (EEDDDDDDDDDDDDDDDDDDDDDDDDDDDDDDDDDDDDDDDDDDDDDDDDDEGE).

Belongs to the FKBP-type PPIase family. Tig subfamily.

The protein resides in the cytoplasm. It carries out the reaction [protein]-peptidylproline (omega=180) = [protein]-peptidylproline (omega=0). Functionally, involved in protein export. Acts as a chaperone by maintaining the newly synthesized protein in an open conformation. Functions as a peptidyl-prolyl cis-trans isomerase. This chain is Trigger factor, found in Herpetosiphon aurantiacus (strain ATCC 23779 / DSM 785 / 114-95).